Consider the following 484-residue polypeptide: Glutamyl-tRNA(Gln) amidotransferase subunit A (484 aa).

Residues Lys-77 and Ser-152 each act as charge relay system in the active site. The active-site Acyl-ester intermediate is the Ser-176.

The protein belongs to the amidase family. GatA subfamily. Heterotrimer of A, B and C subunits.

The enzyme catalyses L-glutamyl-tRNA(Gln) + L-glutamine + ATP + H2O = L-glutaminyl-tRNA(Gln) + L-glutamate + ADP + phosphate + H(+). Allows the formation of correctly charged Gln-tRNA(Gln) through the transamidation of misacylated Glu-tRNA(Gln) in organisms which lack glutaminyl-tRNA synthetase. The reaction takes place in the presence of glutamine and ATP through an activated gamma-phospho-Glu-tRNA(Gln). The sequence is that of Glutamyl-tRNA(Gln) amidotransferase subunit A from Pseudomonas aeruginosa (strain ATCC 15692 / DSM 22644 / CIP 104116 / JCM 14847 / LMG 12228 / 1C / PRS 101 / PAO1).